The sequence spans 449 residues: Trigger factor (449 aa).

In terms of domain architecture, PPIase FKBP-type spans 174 to 261; it reads GDIAVVGFKG…LKDLKTRELP (88 aa). Residues 430 to 449 form a disordered region; it reads ENSTVTEKAPDKDKPSVTDA. Positions 437–449 are enriched in basic and acidic residues; it reads KAPDKDKPSVTDA.

The protein belongs to the FKBP-type PPIase family. Tig subfamily.

It localises to the cytoplasm. It catalyses the reaction [protein]-peptidylproline (omega=180) = [protein]-peptidylproline (omega=0). In terms of biological role, involved in protein export. Acts as a chaperone by maintaining the newly synthesized protein in an open conformation. Functions as a peptidyl-prolyl cis-trans isomerase. The polypeptide is Trigger factor (Synechococcus sp. (strain CC9311)).